A 144-amino-acid polypeptide reads, in one-letter code: D-aminoacyl-tRNA deacylase (144 aa).

The short motif at 136-137 (GP) is the Gly-cisPro motif, important for rejection of L-amino acids element.

Belongs to the DTD family. In terms of assembly, homodimer.

It localises to the cytoplasm. The enzyme catalyses glycyl-tRNA(Ala) + H2O = tRNA(Ala) + glycine + H(+). It catalyses the reaction a D-aminoacyl-tRNA + H2O = a tRNA + a D-alpha-amino acid + H(+). In terms of biological role, an aminoacyl-tRNA editing enzyme that deacylates mischarged D-aminoacyl-tRNAs. Also deacylates mischarged glycyl-tRNA(Ala), protecting cells against glycine mischarging by AlaRS. Acts via tRNA-based rather than protein-based catalysis; rejects L-amino acids rather than detecting D-amino acids in the active site. By recycling D-aminoacyl-tRNA to D-amino acids and free tRNA molecules, this enzyme counteracts the toxicity associated with the formation of D-aminoacyl-tRNA entities in vivo and helps enforce protein L-homochirality. The protein is D-aminoacyl-tRNA deacylase of Pasteurella multocida (strain Pm70).